A 178-amino-acid chain; its full sequence is MAELTTLARPYAKAAFEFAQAANQLQSWYEALEVSAAVAAQEQVKKALAASALSAQQKASVFVQVCGDQLDEKQQNFIRTLASNKRLALLPYIKELFARMKAQQEKTIDVEVTAAYELPVDLINKLAQALSAKLDRNVSVHSSINKSLLGGVVIHTGDTVIDGSVRGRLAKLAEALKS.

This sequence belongs to the ATPase delta chain family. As to quaternary structure, F-type ATPases have 2 components, F(1) - the catalytic core - and F(0) - the membrane proton channel. F(1) has five subunits: alpha(3), beta(3), gamma(1), delta(1), epsilon(1). F(0) has three main subunits: a(1), b(2) and c(10-14). The alpha and beta chains form an alternating ring which encloses part of the gamma chain. F(1) is attached to F(0) by a central stalk formed by the gamma and epsilon chains, while a peripheral stalk is formed by the delta and b chains.

It localises to the cell inner membrane. Functionally, f(1)F(0) ATP synthase produces ATP from ADP in the presence of a proton or sodium gradient. F-type ATPases consist of two structural domains, F(1) containing the extramembraneous catalytic core and F(0) containing the membrane proton channel, linked together by a central stalk and a peripheral stalk. During catalysis, ATP synthesis in the catalytic domain of F(1) is coupled via a rotary mechanism of the central stalk subunits to proton translocation. Its function is as follows. This protein is part of the stalk that links CF(0) to CF(1). It either transmits conformational changes from CF(0) to CF(1) or is implicated in proton conduction. This Cellvibrio japonicus (strain Ueda107) (Pseudomonas fluorescens subsp. cellulosa) protein is ATP synthase subunit delta.